Here is a 1072-residue protein sequence, read N- to C-terminus: DNA-directed RNA polymerase subunit beta (1072 aa).

Belongs to the RNA polymerase beta chain family. In plastids the minimal PEP RNA polymerase catalytic core is composed of four subunits: alpha, beta, beta', and beta''. When a (nuclear-encoded) sigma factor is associated with the core the holoenzyme is formed, which can initiate transcription.

The protein resides in the plastid. Its subcellular location is the chloroplast. The enzyme catalyses RNA(n) + a ribonucleoside 5'-triphosphate = RNA(n+1) + diphosphate. In terms of biological role, DNA-dependent RNA polymerase catalyzes the transcription of DNA into RNA using the four ribonucleoside triphosphates as substrates. The sequence is that of DNA-directed RNA polymerase subunit beta from Arabidopsis thaliana (Mouse-ear cress).